The primary structure comprises 198 residues: Fe/S biogenesis protein NfuA (198 aa).

Cys155 and Cys158 together coordinate [4Fe-4S] cluster.

This sequence belongs to the NfuA family. Homodimer. It depends on [4Fe-4S] cluster as a cofactor.

Functionally, involved in iron-sulfur cluster biogenesis. Binds a 4Fe-4S cluster, can transfer this cluster to apoproteins, and thereby intervenes in the maturation of Fe/S proteins. Could also act as a scaffold/chaperone for damaged Fe/S proteins. The polypeptide is Fe/S biogenesis protein NfuA (Haemophilus influenzae (strain 86-028NP)).